The sequence spans 251 residues: Mycofactocin precursor peptide peptidase (251 aa).

Residues Glu38, His40, Asp49, His128, and Glu167 each contribute to the a divalent metal cation site.

It belongs to the creatininase superfamily. Homooctamer. The cofactor is Fe(2+). Requires Zn(2+) as cofactor.

The enzyme catalyses [mycofactocin precursor peptide]-C-terminal glycyl-N-{5-[(4-hydroxyphenyl)methyl]-4,4-dimethyl-2-oxopyrrolidin-3-yl}acetamide + H2O = [mycofactocin precursor peptide]-C-terminal glycine + 3-amino-5-[(4-hydroxyphenyl)methyl]-4,4-dimethyl-2-pyrrolidin-2-one. In terms of biological role, peptidase involved in the biosynthesis of the enzyme cofactor mycofactocin (MFT). Catalyzes cleavage of the MftC-modified MftA peptide to liberate its final two residues, which consist of a cross-linked valine-decarboxylated tyrosine dipeptide (named 3-amino-5-[(4-hydroxyphenyl)methyl]-4,4-dimethyl-2-pyrrolidin-2-one or ADHP). The protein is Mycofactocin precursor peptide peptidase (mftE) of Mycobacterium tuberculosis (strain CDC 1551 / Oshkosh).